A 439-amino-acid chain; its full sequence is Diaminopimelate decarboxylase (439 aa).

At lysine 66 the chain carries N6-(pyridoxal phosphate)lysine. Pyridoxal 5'-phosphate is bound by residues glycine 248 and 290–293; that span reads EPGR. Positions 293, 330, and 334 each coordinate substrate. The active-site Proton donor is the cysteine 361. The substrate site is built by glutamate 362 and tyrosine 390. A pyridoxal 5'-phosphate-binding site is contributed by tyrosine 390.

It belongs to the Orn/Lys/Arg decarboxylase class-II family. LysA subfamily. Homodimer. Pyridoxal 5'-phosphate is required as a cofactor.

It catalyses the reaction meso-2,6-diaminopimelate + H(+) = L-lysine + CO2. It functions in the pathway amino-acid biosynthesis; L-lysine biosynthesis via DAP pathway; L-lysine from DL-2,6-diaminopimelate: step 1/1. Its function is as follows. Specifically catalyzes the decarboxylation of meso-diaminopimelate (meso-DAP) to L-lysine. The sequence is that of Diaminopimelate decarboxylase from Halalkalibacterium halodurans (strain ATCC BAA-125 / DSM 18197 / FERM 7344 / JCM 9153 / C-125) (Bacillus halodurans).